Here is a 498-residue protein sequence, read N- to C-terminus: 3-octaprenyl-4-hydroxybenzoate carboxy-lyase (498 aa).

Residue Asn-175 participates in Mn(2+) binding. Residues Ile-178–Arg-180, Arg-192–Leu-194, and Arg-197–Gly-198 contribute to the prenylated FMN site. Glu-241 serves as a coordination point for Mn(2+). Asp-290 (proton donor) is an active-site residue.

Belongs to the UbiD family. In terms of assembly, homohexamer. The cofactor is prenylated FMN. It depends on Mn(2+) as a cofactor.

The protein localises to the cell membrane. The catalysed reaction is a 4-hydroxy-3-(all-trans-polyprenyl)benzoate + H(+) = a 2-(all-trans-polyprenyl)phenol + CO2. It functions in the pathway cofactor biosynthesis; ubiquinone biosynthesis. Functionally, catalyzes the decarboxylation of 3-octaprenyl-4-hydroxy benzoate to 2-octaprenylphenol, an intermediate step in ubiquinone biosynthesis. In Pectobacterium atrosepticum (strain SCRI 1043 / ATCC BAA-672) (Erwinia carotovora subsp. atroseptica), this protein is 3-octaprenyl-4-hydroxybenzoate carboxy-lyase.